A 1360-amino-acid polypeptide reads, in one-letter code: DNA-directed RNA polymerase subunit beta (1360 aa).

Belongs to the RNA polymerase beta chain family. The RNAP catalytic core consists of 2 alpha, 1 beta, 1 beta' and 1 omega subunit. When a sigma factor is associated with the core the holoenzyme is formed, which can initiate transcription.

It carries out the reaction RNA(n) + a ribonucleoside 5'-triphosphate = RNA(n+1) + diphosphate. Its function is as follows. DNA-dependent RNA polymerase catalyzes the transcription of DNA into RNA using the four ribonucleoside triphosphates as substrates. The chain is DNA-directed RNA polymerase subunit beta from Caulobacter sp. (strain K31).